A 345-amino-acid polypeptide reads, in one-letter code: KH domain-containing, RNA-binding, signal transduction-associated protein 2 (345 aa).

One can recognise a KH domain in the interval 65–131 (LIPVKQYPKF…AKHAHLSDEL (67 aa)). Disordered regions lie at residues 178-224 (LNGS…TRGA) and 321-345 (SRST…YGRY). Residues 336 to 345 (GYREHPYGRY) are compositionally biased toward basic and acidic residues.

The protein belongs to the KHDRBS family.

The protein resides in the nucleus. Functionally, RNA-binding protein that plays a role in the regulation of alternative splicing. In Xenopus tropicalis (Western clawed frog), this protein is KH domain-containing, RNA-binding, signal transduction-associated protein 2 (khdrbs2).